We begin with the raw amino-acid sequence, 531 residues long: ATP synthase subunit beta (531 aa).

Residues 1-48 (MVKAVTSSKETAKVEKKKSAPRSGVKKAVSKSQAGVKDSSSPVHKSSK) are disordered. Residues 19 to 29 (SAPRSGVKKAV) show a composition bias toward basic residues. Positions 30–44 (SKSQAGVKDSSSPVH) are enriched in polar residues. 203–210 (GGAGVGKT) contacts ATP.

The protein belongs to the ATPase alpha/beta chains family. In terms of assembly, F-type ATPases have 2 components, CF(1) - the catalytic core - and CF(0) - the membrane proton channel. CF(1) has five subunits: alpha(3), beta(3), gamma(1), delta(1), epsilon(1). CF(0) has three main subunits: a(1), b(2) and c(9-12). The alpha and beta chains form an alternating ring which encloses part of the gamma chain. CF(1) is attached to CF(0) by a central stalk formed by the gamma and epsilon chains, while a peripheral stalk is formed by the delta and b chains.

The protein localises to the cell inner membrane. It catalyses the reaction ATP + H2O + 4 H(+)(in) = ADP + phosphate + 5 H(+)(out). Produces ATP from ADP in the presence of a proton gradient across the membrane. The catalytic sites are hosted primarily by the beta subunits. The protein is ATP synthase subunit beta of Bartonella henselae (strain ATCC 49882 / DSM 28221 / CCUG 30454 / Houston 1) (Rochalimaea henselae).